Reading from the N-terminus, the 598-residue chain is Autophagy-related protein 22-1 (598 aa).

Residues 1–20 (MEDGGAGLRAPRYPAEDTSP) form a disordered region. The helical transmembrane segment at 28–48 (GFFCYGLAAEVFAVCAVGSFL) threads the bilayer. N74 and N80 each carry an N-linked (GlcNAc...) asparagine glycan. Helical transmembrane passes span 111–131 (SFAM…LVSV), 159–179 (FLLV…ICVV), and 182–202 (GCSF…HPVV). Positions 207 to 238 (DHPTASSSIPLQPISPQRSSRKSEESLHQVNR) are disordered. The segment covering 212 to 224 (SSSIPLQPISPQR) has biased composition (low complexity). Basic and acidic residues predominate over residues 227-238 (RKSEESLHQVNR). Residues 263-283 (VGIGYMAAVSVQVICILILYI) form a helical membrane-spanning segment. N285 carries N-linked (GlcNAc...) asparagine glycosylation. The next 7 helical transmembrane spans lie at 297 to 317 (TVLF…VMWL), 363 to 383 (VLLF…ISAT), 400 to 420 (ALLS…WPII), 431 to 451 (IIVC…LGFL), 465 to 485 (WYEI…LSSY), 489 to 509 (FYGL…FAIT), and 534 to 554 (AFGF…MVDV). A disordered region spans residues 575-598 (HEDFESFEGSSDGHEAEGLMRDHD). Over residues 585-598 (SDGHEAEGLMRDHD) the composition is skewed to basic and acidic residues.

It belongs to the ATG22 family.

It localises to the vacuole membrane. Functionally, vacuolar effluxer which mediate the efflux of amino acids resulting from autophagic degradation. The release of autophagic amino acids allows the maintenance of protein synthesis and viability during nitrogen starvation. This is Autophagy-related protein 22-1 (atg22-1) from Sclerotinia sclerotiorum (strain ATCC 18683 / 1980 / Ss-1) (White mold).